We begin with the raw amino-acid sequence, 420 residues long: Protein-lysine 6-oxidase (420 aa).

An N-terminal signal peptide occupies residues 1–27 (MRCAPPGLLLAQLHACIFWSGLWPAGC). Positions 28-171 (QSPPAAWRQR…RPGREDVMVG (144 aa)) are cleaved as a propeptide — removed by BMP1. The tract at residues 54-177 (AQYQPPRRRQ…VMVGDDPYSP (124 aa)) is disordered. Asn-78 is a glycosylation site (N-linked (GlcNAc...) asparagine). The segment covering 82–92 (PRAAAAAAARP) has biased composition (low complexity). Residues 93–105 (QPEPQPQAQPQPR) are compositionally biased toward pro residues. 2 stretches are compositionally biased toward basic residues: residues 107 to 119 (RSSR…RRHW) and 134 to 147 (APRR…SRRR). Residue Tyr-190 is modified to Sulfotyrosine. The lysyl-oxidase like stretch occupies residues 216-420 (PDLVPDPYYI…YASGCTISPY (205 aa)). 5 disulfide bridges follow: Cys-241/Cys-247, Cys-294/Cys-343, Cys-327/Cys-333, Cys-354/Cys-364, and Cys-401/Cys-415. Cu cation contacts are provided by His-295, His-297, and His-299. The lysine tyrosylquinone (Lys-Tyr) cross-link spans 323 to 358 (KASFCLEDTSCDYGYYRRYACTAHTQGLSPGCYDTY). A 2',4',5'-topaquinone modification is found at Tyr-358.

It belongs to the lysyl oxidase family. It depends on Cu cation as a cofactor. Lysine tyrosylquinone residue serves as cofactor. The lysine tyrosylquinone cross-link (LTQ) is generated by condensation of the epsilon-amino group of a lysine with a topaquinone produced by oxidation of tyrosine. In terms of processing, proteolytically cleaved by BMP1 which removes the propeptide. Also proteolytically cleaved by ADAMTS2 and ADAMTS14, but not by ADAMTS3, at an additional cleavage site downstream of the BMP1 cleavage site. The propeptide plays a role in directing the deposition of this enzyme to elastic fibers, via interaction with tropoelastin. Cleavage by BMP1 to remove the propeptide does not increase enzymatic activity but increases binding to collagen. Cleavage by ADAMTS2 produces a form with reduced collagen-binding activity. Post-translationally, sulfated at Tyr-190 and also at either Tyr-186 or Tyr-187 which enhances binding to collagen.

The protein localises to the secreted. Its subcellular location is the extracellular space. It carries out the reaction L-lysyl-[protein] + O2 + H2O = (S)-2-amino-6-oxohexanoyl-[protein] + H2O2 + NH4(+). Its function is as follows. Responsible for the post-translational oxidative deamination of peptidyl lysine residues in precursors to fibrous collagen and elastin. In terms of biological role, in addition to cross linking of extracellular matrix proteins, it may have a direct role in tumor suppression. The protein is Protein-lysine 6-oxidase (LOX) of Gallus gallus (Chicken).